The following is a 282-amino-acid chain: Bifunctional protein FolD (282 aa).

NADP(+) is bound by residues Asn-165–Ser-167, Ser-190, and Ile-231.

It belongs to the tetrahydrofolate dehydrogenase/cyclohydrolase family. Homodimer.

It carries out the reaction (6R)-5,10-methylene-5,6,7,8-tetrahydrofolate + NADP(+) = (6R)-5,10-methenyltetrahydrofolate + NADPH. It catalyses the reaction (6R)-5,10-methenyltetrahydrofolate + H2O = (6R)-10-formyltetrahydrofolate + H(+). Its pathway is one-carbon metabolism; tetrahydrofolate interconversion. In terms of biological role, catalyzes the oxidation of 5,10-methylenetetrahydrofolate to 5,10-methenyltetrahydrofolate and then the hydrolysis of 5,10-methenyltetrahydrofolate to 10-formyltetrahydrofolate. This is Bifunctional protein FolD from Clostridium botulinum (strain Okra / Type B1).